The chain runs to 537 residues: Mitochondrial distribution and morphology protein 34 (537 aa).

An SMP-LTD domain is found at 1-195; that stretch reads MAFNFNWSPL…LPAIIHRLSL (195 aa). Disordered stretches follow at residues 320 to 339, 348 to 403, 421 to 493, and 516 to 537; these read YTFS…RPSL, GLSL…IMPH, GRSP…DTSS, and KNGN…YEAR. Positions 355-371 are enriched in basic residues; the sequence is RHSKAGRKKKTRVVNLR. Residues 378-391 show a composition bias toward acidic residues; the sequence is ANSEEEEDTPETDS. Residues 425-441 show a composition bias toward polar residues; the sequence is DLQQQPRRPSFRAQATN.

It belongs to the MDM34 family. In terms of assembly, component of the ER-mitochondria encounter structure (ERMES) or MDM complex, composed of MMM1, MDM10, MDM12 and MDM34.

The protein localises to the mitochondrion outer membrane. Functionally, component of the ERMES/MDM complex, which serves as a molecular tether to connect the endoplasmic reticulum (ER) and mitochondria. Components of this complex are involved in the control of mitochondrial shape and protein biogenesis, and function in nonvesicular lipid trafficking between the ER and mitochondria. MDM34 is required for the interaction of the ER-resident membrane protein MMM1 and the outer mitochondrial membrane-resident beta-barrel protein MDM10. The chain is Mitochondrial distribution and morphology protein 34 from Chaetomium globosum (strain ATCC 6205 / CBS 148.51 / DSM 1962 / NBRC 6347 / NRRL 1970) (Soil fungus).